Reading from the N-terminus, the 103-residue chain is MRQRLLPSVTSLLLVALLFPGSSQARHVNHSATEALGELRERAPGQGTNGFQLLRHAVKRDLLPPRTPPYQVHISHQEARGPSFKICVGFLGPRWARGCSTGN.

An N-terminal signal peptide occupies residues 1 to 24 (MRQRLLPSVTSLLLVALLFPGSSQ). Asn-29 is a glycosylation site (N-linked (GlcNAc...) asparagine).

The protein belongs to the SPAG11 family.

The protein localises to the secreted. Its function is as follows. Has antimicrobial activity against E.coli. Plays a role in the defense response in the male reproductive tract, contributing to sperm maturation, storage and protection. The protein is Sperm-associated antigen 11A of Pan troglodytes (Chimpanzee).